The sequence spans 76 residues: Dolichyl-diphosphooligosaccharide--protein glycosyltransferase subunit OST5 (76 aa).

The next 2 helical transmembrane spans lie at F14–I34 and A54–I74.

The protein belongs to the OST5 family. Component of the oligosaccharyltransferase (OST) complex.

The protein localises to the membrane. In terms of biological role, subunit of the oligosaccharyl transferase (OST) complex that catalyzes the initial transfer of a defined glycan (Glc(3)Man(9)GlcNAc(2) in eukaryotes) from the lipid carrier dolichol-pyrophosphate to an asparagine residue within an Asn-X-Ser/Thr consensus motif in nascent polypeptide chains, the first step in protein N-glycosylation. N-glycosylation occurs cotranslationally and the complex associates with the Sec61 complex at the channel-forming translocon complex that mediates protein translocation across the endoplasmic reticulum (ER). All subunits are required for a maximal enzyme activity. This chain is Dolichyl-diphosphooligosaccharide--protein glycosyltransferase subunit OST5, found in Dictyostelium discoideum (Social amoeba).